We begin with the raw amino-acid sequence, 149 residues long: Ribonuclease pancreatic (149 aa).

The first 25 residues, 1–25, serve as a signal peptide directing secretion; that stretch reads MGLEKSFILFSLLVLVLGWVQPSLS. Positions 30–40 are enriched in basic and acidic residues; that stretch reads ADKFKRQHMDT. The disordered stretch occupies residues 30–49; the sequence is ADKFKRQHMDTEGSSNSSPT. Substrate contacts are provided by Lys32 and Arg35. His37 functions as the Proton acceptor in the catalytic mechanism. 4 disulfides stabilise this stretch: Cys51/Cys109, Cys65/Cys120, Cys83/Cys135, and Cys90/Cys97. Asn62 is a glycosylation site (N-linked (GlcNAc...) asparagine). Position 66–70 (66–70) interacts with substrate; the sequence is KPVNT. The N-linked (GlcNAc...) asparagine glycan is linked to Asn87. Substrate contacts are provided by Lys91 and Arg110. His144 serves as the catalytic Proton donor.

The protein belongs to the pancreatic ribonuclease family. Monomer. Interacts with and forms tight 1:1 complexes with RNH1. Dimerization of two such complexes may occur. Interaction with RNH1 inhibits this protein. As to expression, pancreas.

It localises to the secreted. It catalyses the reaction an [RNA] containing cytidine + H2O = an [RNA]-3'-cytidine-3'-phosphate + a 5'-hydroxy-ribonucleotide-3'-[RNA].. It carries out the reaction an [RNA] containing uridine + H2O = an [RNA]-3'-uridine-3'-phosphate + a 5'-hydroxy-ribonucleotide-3'-[RNA].. Endonuclease that catalyzes the cleavage of RNA on the 3' side of pyrimidine nucleotides. Acts on single-stranded and double-stranded RNA. This is Ribonuclease pancreatic (RNASE1) from Niviventer cremoriventer (Dark-tailed tree rat).